The primary structure comprises 141 residues: Cystatin (141 aa).

The signal sequence occupies residues Met1–Met26. In terms of domain architecture, Cystatin spans Gly29–Trp129. The Secondary area of contact signature appears at Gln73–Gly77. Intrachain disulfides connect Cys91–Cys107 and Cys120–Cys140.

Belongs to the cystatin family. Expressed by the venom gland at an extremely low level (at protein level).

The protein resides in the secreted. Functionally, inhibits various C1 cysteine proteases including cathepsin L, papain and cathepsin B. This protein has no toxic activity and its function in the venom is unknown. It may play a role as a housekeeping or regulatory protein. The chain is Cystatin from Oxyuranus microlepidotus (Inland taipan).